We begin with the raw amino-acid sequence, 147 residues long: Urease accessory protein UreE (147 aa).

It belongs to the UreE family.

Its subcellular location is the cytoplasm. Its function is as follows. Involved in urease metallocenter assembly. Binds nickel. Probably functions as a nickel donor during metallocenter assembly. This chain is Urease accessory protein UreE, found in Marinomonas sp. (strain MWYL1).